A 209-amino-acid polypeptide reads, in one-letter code: ATP-dependent Clp protease proteolytic subunit (209 aa).

S111 (nucleophile) is an active-site residue. Residue H136 is part of the active site.

Belongs to the peptidase S14 family. In terms of assembly, fourteen ClpP subunits assemble into 2 heptameric rings which stack back to back to give a disk-like structure with a central cavity, resembling the structure of eukaryotic proteasomes.

The protein resides in the cytoplasm. The catalysed reaction is Hydrolysis of proteins to small peptides in the presence of ATP and magnesium. alpha-casein is the usual test substrate. In the absence of ATP, only oligopeptides shorter than five residues are hydrolyzed (such as succinyl-Leu-Tyr-|-NHMec, and Leu-Tyr-Leu-|-Tyr-Trp, in which cleavage of the -Tyr-|-Leu- and -Tyr-|-Trp bonds also occurs).. Functionally, cleaves peptides in various proteins in a process that requires ATP hydrolysis. Has a chymotrypsin-like activity. Plays a major role in the degradation of misfolded proteins. This Dechloromonas aromatica (strain RCB) protein is ATP-dependent Clp protease proteolytic subunit.